Consider the following 171-residue polypeptide: Adenine phosphoribosyltransferase (171 aa).

The protein belongs to the purine/pyrimidine phosphoribosyltransferase family. As to quaternary structure, homodimer.

Its subcellular location is the cytoplasm. It catalyses the reaction AMP + diphosphate = 5-phospho-alpha-D-ribose 1-diphosphate + adenine. It functions in the pathway purine metabolism; AMP biosynthesis via salvage pathway; AMP from adenine: step 1/1. In terms of biological role, catalyzes a salvage reaction resulting in the formation of AMP, that is energically less costly than de novo synthesis. This Citrifermentans bemidjiense (strain ATCC BAA-1014 / DSM 16622 / JCM 12645 / Bem) (Geobacter bemidjiensis) protein is Adenine phosphoribosyltransferase.